Here is a 204-residue protein sequence, read N- to C-terminus: Inner membrane-spanning protein YciB (204 aa).

6 consecutive transmembrane segments (helical) span residues 3–23 (AEISPLLKFVLELGPLMVFFF), 45–65 (IFIATGLFMIATATALTVSWI), 70–90 (LPIMPLISGIVVFVFGALTLW), 107–127 (LFGVILLGGLFFGQSLLGYVF), 145–165 (WGVFFLFLAVLNEVVWRMFTT), and 168–188 (WVAFKVWGTMPITIIFTMAQM).

Belongs to the YciB family.

Its subcellular location is the cell inner membrane. Its function is as follows. Plays a role in cell envelope biogenesis, maintenance of cell envelope integrity and membrane homeostasis. In Agrobacterium fabrum (strain C58 / ATCC 33970) (Agrobacterium tumefaciens (strain C58)), this protein is Inner membrane-spanning protein YciB.